The primary structure comprises 126 residues: Holo-[acyl-carrier-protein] synthase (126 aa).

Mg(2+)-binding residues include Asp-9 and Glu-58.

Belongs to the P-Pant transferase superfamily. AcpS family. Mg(2+) serves as cofactor.

It localises to the cytoplasm. It carries out the reaction apo-[ACP] + CoA = holo-[ACP] + adenosine 3',5'-bisphosphate + H(+). Its function is as follows. Transfers the 4'-phosphopantetheine moiety from coenzyme A to a Ser of acyl-carrier-protein. The chain is Holo-[acyl-carrier-protein] synthase from Escherichia coli O139:H28 (strain E24377A / ETEC).